Here is a 322-residue protein sequence, read N- to C-terminus: 4-hydroxy-3-methylbut-2-enyl diphosphate reductase (322 aa).

A [4Fe-4S] cluster-binding site is contributed by Cys15. Residues His44 and His77 each contribute to the (2E)-4-hydroxy-3-methylbut-2-enyl diphosphate site. Residues His44 and His77 each coordinate dimethylallyl diphosphate. Isopentenyl diphosphate-binding residues include His44 and His77. Residue Cys99 coordinates [4Fe-4S] cluster. His127 serves as a coordination point for (2E)-4-hydroxy-3-methylbut-2-enyl diphosphate. His127 contacts dimethylallyl diphosphate. Isopentenyl diphosphate is bound at residue His127. The active-site Proton donor is Glu129. Thr168 is a (2E)-4-hydroxy-3-methylbut-2-enyl diphosphate binding site. A [4Fe-4S] cluster-binding site is contributed by Cys198. (2E)-4-hydroxy-3-methylbut-2-enyl diphosphate is bound by residues Ser226, Ser227, Asn228, and Ser270. Positions 226, 227, 228, and 270 each coordinate dimethylallyl diphosphate. Isopentenyl diphosphate contacts are provided by Ser226, Ser227, Asn228, and Ser270.

The protein belongs to the IspH family. Requires [4Fe-4S] cluster as cofactor.

It catalyses the reaction isopentenyl diphosphate + 2 oxidized [2Fe-2S]-[ferredoxin] + H2O = (2E)-4-hydroxy-3-methylbut-2-enyl diphosphate + 2 reduced [2Fe-2S]-[ferredoxin] + 2 H(+). It carries out the reaction dimethylallyl diphosphate + 2 oxidized [2Fe-2S]-[ferredoxin] + H2O = (2E)-4-hydroxy-3-methylbut-2-enyl diphosphate + 2 reduced [2Fe-2S]-[ferredoxin] + 2 H(+). It participates in isoprenoid biosynthesis; dimethylallyl diphosphate biosynthesis; dimethylallyl diphosphate from (2E)-4-hydroxy-3-methylbutenyl diphosphate: step 1/1. Its pathway is isoprenoid biosynthesis; isopentenyl diphosphate biosynthesis via DXP pathway; isopentenyl diphosphate from 1-deoxy-D-xylulose 5-phosphate: step 6/6. Catalyzes the conversion of 1-hydroxy-2-methyl-2-(E)-butenyl 4-diphosphate (HMBPP) into a mixture of isopentenyl diphosphate (IPP) and dimethylallyl diphosphate (DMAPP). Acts in the terminal step of the DOXP/MEP pathway for isoprenoid precursor biosynthesis. The sequence is that of 4-hydroxy-3-methylbut-2-enyl diphosphate reductase from Neisseria gonorrhoeae (strain ATCC 700825 / FA 1090).